Here is a 220-residue protein sequence, read N- to C-terminus: Small ribosomal subunit protein eS1 (220 aa).

This sequence belongs to the eukaryotic ribosomal protein eS1 family.

This Pyrobaculum arsenaticum (strain DSM 13514 / JCM 11321 / PZ6) protein is Small ribosomal subunit protein eS1.